The sequence spans 798 residues: uncharacterized protein (798 aa).

A disordered region spans residues 432–573; the sequence is KLTDNLSNKS…KNKAYRGRRV (142 aa). Composition is skewed to low complexity over residues 438–449, 456–465, 473–487, and 495–510; these read SNKSSNDNTSET, RSSNSRNSDN, SKTQ…SRIP, and STNS…SDVY. The span at 519–529 shows a compositional bias: polar residues; that stretch reads PSRSTYKSRTI. Over residues 535-547 the composition is skewed to low complexity; the sequence is ESSPVSSRTSSPV. Over residues 548–562 the composition is skewed to basic and acidic residues; it reads DDSRLKQSRISEDKP. Residues 563–572 are compositionally biased toward basic residues; the sequence is RKNKAYRGRR.

The protein resides in the virion. This is an uncharacterized protein from Acanthamoeba polyphaga (Amoeba).